A 249-amino-acid chain; its full sequence is V-type proton ATPase subunit D 2 (249 aa).

This sequence belongs to the V-ATPase D subunit family. As to quaternary structure, V-ATPase is a heteromultimeric enzyme made up of two complexes: the ATP-hydrolytic V1 complex and the proton translocation V0 complex. The V1 complex consists of three catalytic AB heterodimers that form a heterohexamer, three peripheral stalks each consisting of EG heterodimers, one central rotor including subunits D and F, and the regulatory subunits C and H. The proton translocation complex V0 consists of the proton transport subunit a, a ring of proteolipid subunits c9c'', rotary subunit d, subunits e and f, and the accessory subunits VhaAC45 and ATP6AP2.

In terms of biological role, subunit of the V1 complex of vacuolar(H+)-ATPase (V-ATPase), a multisubunit enzyme composed of a peripheral complex (V1) that hydrolyzes ATP and a membrane integral complex (V0) that translocates protons. V-ATPase is responsible for acidifying and maintaining the pH of intracellular compartments and in some cell types, is targeted to the plasma membrane, where it is responsible for acidifying the extracellular environment. In Drosophila melanogaster (Fruit fly), this protein is V-type proton ATPase subunit D 2 (Vha36-3).